Reading from the N-terminus, the 430-residue chain is Xaa-Pro aminopeptidase (430 aa).

Residues aspartate 254, aspartate 265, histidine 348, glutamate 377, and glutamate 400 each coordinate Mn(2+).

The protein belongs to the peptidase M24B family. In terms of assembly, homotetramer. Requires Mn(2+) as cofactor.

It catalyses the reaction Release of any N-terminal amino acid, including proline, that is linked to proline, even from a dipeptide or tripeptide.. This Haemophilus influenzae (strain ATCC 51907 / DSM 11121 / KW20 / Rd) protein is Xaa-Pro aminopeptidase (pepP).